The chain runs to 238 residues: Ribonuclease PH (238 aa).

Phosphate-binding positions include R86 and 124 to 126 (GTR).

It belongs to the RNase PH family. In terms of assembly, homohexameric ring arranged as a trimer of dimers.

The catalysed reaction is tRNA(n+1) + phosphate = tRNA(n) + a ribonucleoside 5'-diphosphate. In terms of biological role, phosphorolytic 3'-5' exoribonuclease that plays an important role in tRNA 3'-end maturation. Removes nucleotide residues following the 3'-CCA terminus of tRNAs; can also add nucleotides to the ends of RNA molecules by using nucleoside diphosphates as substrates, but this may not be physiologically important. Probably plays a role in initiation of 16S rRNA degradation (leading to ribosome degradation) during starvation. The chain is Ribonuclease PH from Vibrio parahaemolyticus serotype O3:K6 (strain RIMD 2210633).